Consider the following 720-residue polypeptide: MSASDLTSVQATAPQGRRQILVTSALPYANGQIHIGHLVEYIQTDIWVRTLRMHGHEVYYIGADDTHGTPVMLRAEKEGLTPKQLIDRVWTEHKRDFDSFGVSFDNFYSTDSDENRVLSESIYLALKENGLIAERAIEQAYDPVKEMFLPDRFIKGECPKCHAKDQYGDNCEVCGSTYLPTELLNPYSVVSGATPVRKTSTHYFFRLSDPRCESFLREWVSGLAQPEATNKMREWLGDAGEAKLADWDISRDAPYFGFEIPGAPGKYFYVWLDAPVGYYASFKNLCDREGIDFDAWIRAGSTAEQYHFIGKDILYFHTLFWPAMLEFSGHRTPTNVFAHGFLTVDGAKMSKSRGTFITAQSYIDTGLNPEWLRYYFAAKLNATMEDIDLNLDDFQARVNSDLVGKYVNIASRAAGFLIKRFDGRVQDSAMNHPLVAKLRDAIASIAAHYEGREYSRALRQTMELADEVNAYVDGAKPWELAKDPANAVALHETCSVSLEAFRLLSLALKPVMPRVAEAVEAFFGVAPLAWADAAKPLSSAQPIKAYQHLMTRVDPKQIDALLAANRDSLQADAAGAAAAGTTAANAAKDAKSAKANAKAVAANGADDAPISIDDFAKVDLRIAKIVACQAVEGSDKLLQLTLDIGEEKTRNVFSGIKSAYQPEQLVGKLTVMVANLAPRKMKFGLSEGMVLAASAADEKAEPGLYILEPHSGAKPGMRVK.

Positions 27-37 match the 'HIGH' region motif; the sequence is PYANGQIHIGH. C158, C161, C171, and C174 together coordinate Zn(2+). The 'KMSKS' region signature appears at 348 to 352; sequence KMSKS. K351 contributes to the ATP binding site. The tRNA-binding domain occupies 614 to 720; sequence DFAKVDLRIA…SGAKPGMRVK (107 aa).

Belongs to the class-I aminoacyl-tRNA synthetase family. MetG type 1 subfamily. As to quaternary structure, homodimer. Zn(2+) is required as a cofactor.

The protein resides in the cytoplasm. It carries out the reaction tRNA(Met) + L-methionine + ATP = L-methionyl-tRNA(Met) + AMP + diphosphate. Functionally, is required not only for elongation of protein synthesis but also for the initiation of all mRNA translation through initiator tRNA(fMet) aminoacylation. The protein is Methionine--tRNA ligase of Burkholderia ambifaria (strain MC40-6).